Consider the following 114-residue polypeptide: MSQAEMSTCSMPHTQRVFQEAVRNGNTKELHSLLQNMTNCEFNVNSFGPEGQTALHQSVIDGNLELVKLLVKFGADIRLANRDGWSALHIAAYGGHQDIVLYLITKAKYSSSSR.

ANK repeat units lie at residues 50 to 79 (EGQT…DIRL) and 83 to 112 (DGWS…YSSS).

It belongs to the NRARP family. In terms of assembly, forms a ternary complex with the intracellular domain (ICD) of notch1 and rbpj/suh.

In terms of biological role, promotes loss of intracellular domain (ICD) of Notch1 in embryos. By down-regulating ICD levels, could function as a negative feedback regulator of Notch signaling that attenuates ICD-mediated transcription. Involved in angiogenesis. May be involved in somitogenesis. This Xenopus laevis (African clawed frog) protein is Notch-regulated ankyrin repeat-containing protein (nrarp).